The chain runs to 72 residues: Large ribosomal subunit protein uL29 (72 aa).

Belongs to the universal ribosomal protein uL29 family.

The protein is Large ribosomal subunit protein uL29 of Prochlorococcus marinus (strain MIT 9215).